The chain runs to 511 residues: MARLALLSVSDKSGIVELAQRLVNEFQFDLISSGGTAKTLKEAGVPVTKVSDYTGAPEILGGRVKTLHPRIHGGILARRDLPSDQADLEANDIRPLDLVVVNLYPFEQTIAKPGVTVAEAVEQIDIGGPAMIRATAKNFAHTTVLTNPNQYEAYLQALQEQGEIPLALRQQFAGEAFALTNAYDQAIANYFSGLSGDSANQFGLSGTLRQPLRYGENPHQSAGWYQTGREATGWAKAEKLQGKELSYNNLVDLEAARRIINEFDVREPAAVILKHTNPCGVALAPTLVEAYQKAFNADATSAFGGIVALNQPLDGPTAAAMVKTFLECIVAPGCDAEAQEILAKKNNLRVLILPDLATGPSQTIKAIAGGFLVQSADDEREDPSTWQVVTEKQPSGEELAELAFAWKVCKHVKSNAITITKNKTTLGVGAGQMNRVGSVEIALKQAGTEAQGACLASDAFFPFDDSVRTAAAAGITTIIQPGGSMRDQDSIQAANELGLVMIFTGVRHFLH.

Residues 1 to 146 (MARLALLSVS…KNFAHTTVLT (146 aa)) form the MGS-like domain.

Belongs to the PurH family.

It carries out the reaction (6R)-10-formyltetrahydrofolate + 5-amino-1-(5-phospho-beta-D-ribosyl)imidazole-4-carboxamide = 5-formamido-1-(5-phospho-D-ribosyl)imidazole-4-carboxamide + (6S)-5,6,7,8-tetrahydrofolate. The catalysed reaction is IMP + H2O = 5-formamido-1-(5-phospho-D-ribosyl)imidazole-4-carboxamide. It participates in purine metabolism; IMP biosynthesis via de novo pathway; 5-formamido-1-(5-phospho-D-ribosyl)imidazole-4-carboxamide from 5-amino-1-(5-phospho-D-ribosyl)imidazole-4-carboxamide (10-formyl THF route): step 1/1. The protein operates within purine metabolism; IMP biosynthesis via de novo pathway; IMP from 5-formamido-1-(5-phospho-D-ribosyl)imidazole-4-carboxamide: step 1/1. This chain is Bifunctional purine biosynthesis protein PurH, found in Synechocystis sp. (strain ATCC 27184 / PCC 6803 / Kazusa).